The primary structure comprises 566 residues: CTP synthase (566 aa).

Residues 1–265 are amidoligase domain; sequence MTKYVFVTGG…DEIVCHKLNL (265 aa). Residue Ser-13 participates in CTP binding. Ser-13 provides a ligand contact to UTP. ATP contacts are provided by residues 14-19 and Asp-71; that span reads SLGKGI. Mg(2+)-binding residues include Asp-71 and Glu-139. CTP is bound by residues 146–148, 186–191, and Lys-222; these read DIE and KTKPTQ. UTP is bound by residues 186–191 and Lys-222; that span reads KTKPTQ. Residues 290 to 543 form the Glutamine amidotransferase type-1 domain; sequence EIALVGKYVD…IEAAAVFADK (254 aa). Gly-351 is a binding site for L-glutamine. Residue Cys-378 is the Nucleophile; for glutamine hydrolysis of the active site. L-glutamine is bound by residues 379–382, Glu-402, and Arg-469; that span reads LGMQ. Active-site residues include His-516 and Glu-518. The disordered stretch occupies residues 545–566; sequence PSSEGAISADKPERTTTGAYIQ.

It belongs to the CTP synthase family. Homotetramer.

The catalysed reaction is UTP + L-glutamine + ATP + H2O = CTP + L-glutamate + ADP + phosphate + 2 H(+). The enzyme catalyses L-glutamine + H2O = L-glutamate + NH4(+). It catalyses the reaction UTP + NH4(+) + ATP = CTP + ADP + phosphate + 2 H(+). It participates in pyrimidine metabolism; CTP biosynthesis via de novo pathway; CTP from UDP: step 2/2. Allosterically activated by GTP, when glutamine is the substrate; GTP has no effect on the reaction when ammonia is the substrate. The allosteric effector GTP functions by stabilizing the protein conformation that binds the tetrahedral intermediate(s) formed during glutamine hydrolysis. Inhibited by the product CTP, via allosteric rather than competitive inhibition. Functionally, catalyzes the ATP-dependent amination of UTP to CTP with either L-glutamine or ammonia as the source of nitrogen. Regulates intracellular CTP levels through interactions with the four ribonucleotide triphosphates. In Nitrosospira multiformis (strain ATCC 25196 / NCIMB 11849 / C 71), this protein is CTP synthase.